We begin with the raw amino-acid sequence, 261 residues long: Sulfur carrier protein FdhD (261 aa).

The active-site Cysteine persulfide intermediate is the Cys-105. 245–250 lines the Mo-bis(molybdopterin guanine dinucleotide) pocket; the sequence is FIRGDR.

The protein belongs to the FdhD family.

Its subcellular location is the cytoplasm. Functionally, required for formate dehydrogenase (FDH) activity. Acts as a sulfur carrier protein that transfers sulfur from IscS to the molybdenum cofactor prior to its insertion into FDH. The chain is Sulfur carrier protein FdhD from Listeria monocytogenes serovar 1/2a (strain ATCC BAA-679 / EGD-e).